The chain runs to 513 residues: Acyltransferase uat1 (513 aa).

The active-site Proton acceptor is the His158.

The protein belongs to the plant acyltransferase family.

It functions in the pathway secondary metabolite biosynthesis. In terms of biological role, acyltransferase; part of the gene cluster that mediates the biosynthesis of the glycolipid biosurfactant ustilagic acid (UA). UA is a secreted cellobiose glycolipid that is toxic for many microorganisms and confers biocontrol activity to U.maydis. UA consists of 15,16-dihydroxypalmitic or 2,15,16-trihydroxypalmitic acid, which is O-glycosidically linked to cellobiose at its terminal hydroxyl group. In addition, the cellobiose moiety is acetylated and acylated with a short-chain hydroxy fatty acid. UA biosynthesis starts with omega-hydroxylation of palmitic acid catalyzed by the cytochrome P450 monooxygenase cyp1. Terminal hydroxylation of palmitic acid precedes subterminal hydroxylation catalyzed by the cytochrome P450 monooxygenase cyp2. Sequential glucosylation of the hydroxy fatty acid is probably catalyzed by the glycosyltransferase ugt1. The cellobiose lipid is further decorated by acetylation of the proximal glucose residue and by acylation with a short-chain beta-hydroxy fatty acid at the distal glucose residue. The acyltransferase uat1 may be a good candidate for catalyzing either acetylation or acylation of the cellobiose lipid. The fatty acid synthase fas2 may be involved in synthesis of the carbon backbone of the short-chain beta-hydroxy fatty acid esterified to the cellobiose disaccharide. The secreted UA consists of a mixture of both alpha-hydroxylated and non-hydroxylated glycolipids; therefore, alpha-hydroxylation of the long-chain fatty, catalyzed by the fatty acid hydroxylase ahd1, occurs late in UA biosynthesis and may be the last step before secretion. The protein is Acyltransferase uat1 of Mycosarcoma maydis (Corn smut fungus).